Consider the following 130-residue polypeptide: Small ribosomal subunit protein uS9 (130 aa).

The interval 107–130 (DSRKVERKKPGLKKARKASQFSKR) is disordered. Residues 111-130 (VERKKPGLKKARKASQFSKR) show a composition bias toward basic residues.

The protein belongs to the universal ribosomal protein uS9 family.

The sequence is that of Small ribosomal subunit protein uS9 from Streptococcus sanguinis (strain SK36).